Consider the following 165-residue polypeptide: Ubiquitin-like protein ISG15 (165 aa).

Ubiquitin-like domains are found at residues 2-78 and 79-157; these read GWDL…VDKC and DEPL…LRGG. Cysteine 78 is subject to S-nitrosocysteine; alternate. The short motif at 152–157 is the LRLRGG element; it reads LRLRGG. The involved in the ligation of specific target proteins stretch occupies residues 153 to 157; the sequence is RLRGG. Glycine 157 is covalently cross-linked (Glycyl lysine isopeptide (Gly-Lys) (interchain with K-? in acceptor proteins)). Residues 158–165 constitute a propeptide, removed in mature form; it reads GTEPGGRS.

Homodimer; disulfide-linked. Interacts with, and is conjugated to its targets by UBE1L (E1 enzyme) and UBE2E2 (E2 enzyme). Interacts with NEDD4. Interacts with PARP12; this interaction inhibits PINK1/Parkin-dependent mitophagy. As to quaternary structure, (Microbial infection) Interacts with vaccinia virus protein E3. In terms of assembly, (Microbial infection) Interaction with influenza B NS1 protein inhibits its conjugation. (Microbial infection) Interacts (via C-terminus) with Crimean-Congo hemorrhagic fever virus (CCHFV) RNA-directed RNA polymerase L (via N-terminus); the deISGylase activity of the viral protein interferes with antiviral signaling pathways mediated by NF-kappaB and IRF signalings. As to quaternary structure, (Microbial infection) Interacts with human cytomegalovirus protein UL26; this interaction inhibits global protein ISGylation. S-nitrosylation decreases its dimerization, thereby increasing the availability as well as the solubility of monomeric ISG15 for its conjugation to cellular proteins. In terms of processing, induced as an inactive, precursor protein that is cleaved by specific proteases to expose the C-terminal diglycine (LRLRGG) motif. This motif is essential not only for its conjugation to substrates but also for its recognition by the relevant processing proteases. Detected in lymphoid cells, striated and smooth muscle, several epithelia and neurons. Expressed in neutrophils, monocytes and lymphocytes. Enhanced expression seen in pancreatic adenocarcinoma, endometrial cancer, and bladder cancer, as compared to non-cancerous tissue. In bladder cancer, the increase in expression exhibits a striking positive correlation with more advanced stages of the disease.

The protein localises to the cytoplasm. Its subcellular location is the secreted. Functionally, ubiquitin-like protein which plays a key role in the innate immune response to viral infection either via its conjugation to a target protein (ISGylation) or via its action as a free or unconjugated protein. ISGylation involves a cascade of enzymatic reactions involving E1, E2, and E3 enzymes which catalyze the conjugation of ISG15 to a lysine residue in the target protein. Its target proteins include IFIT1, MX1/MxA, PPM1B, UBE2L6, UBA7, CHMP5, CHMP2A, CHMP4B and CHMP6. Isgylation of the viral sensor IFIH1/MDA5 promotes IFIH1/MDA5 oligomerization and triggers activation of innate immunity against a range of viruses, including coronaviruses, flaviviruses and picornaviruses. Can also isgylate: EIF2AK2/PKR which results in its activation, RIGI which inhibits its function in antiviral signaling response, EIF4E2 which enhances its cap structure-binding activity and translation-inhibition activity, UBE2N and UBE2E1 which negatively regulates their activity, IRF3 which inhibits its ubiquitination and degradation and FLNB which prevents its ability to interact with the upstream activators of the JNK cascade thereby inhibiting IFNA-induced JNK signaling. Exhibits antiviral activity towards both DNA and RNA viruses, including influenza A, HIV-1 and Ebola virus. Restricts HIV-1 and ebola virus via disruption of viral budding. Inhibits the ubiquitination of HIV-1 Gag and host TSG101 and disrupts their interaction, thereby preventing assembly and release of virions from infected cells. Inhibits Ebola virus budding mediated by the VP40 protein by disrupting ubiquitin ligase activity of NEDD4 and its ability to ubiquitinate VP40. ISGylates influenza A virus NS1 protein which causes a loss of function of the protein and the inhibition of virus replication. The secreted form of ISG15 can: induce natural killer cell proliferation, act as a chemotactic factor for neutrophils and act as a IFN-gamma-inducing cytokine playing an essential role in antimycobacterial immunity. The secreted form acts through the integrin ITGAL/ITGB2 receptor to initiate activation of SRC family tyrosine kinases including LYN, HCK and FGR which leads to secretion of IFNG and IL10; the interaction is mediated by ITGAL. This Homo sapiens (Human) protein is Ubiquitin-like protein ISG15.